The chain runs to 292 residues: Acetylglutamate kinase (292 aa).

Substrate is bound by residues 64 to 65 (GG), Arg86, and Asn190.

It belongs to the acetylglutamate kinase family. ArgB subfamily.

It is found in the cytoplasm. It catalyses the reaction N-acetyl-L-glutamate + ATP = N-acetyl-L-glutamyl 5-phosphate + ADP. It functions in the pathway amino-acid biosynthesis; L-arginine biosynthesis; N(2)-acetyl-L-ornithine from L-glutamate: step 2/4. Catalyzes the ATP-dependent phosphorylation of N-acetyl-L-glutamate. This chain is Acetylglutamate kinase, found in Pelobacter propionicus (strain DSM 2379 / NBRC 103807 / OttBd1).